The primary structure comprises 261 residues: Sepiapterin reductase (261 aa).

N-acetylmethionine is present on M1. An NADP(+)-binding site is contributed by 15–21; the sequence is GASRGFG. Residue S33 is modified to Phosphoserine. 43-44 serves as a coordination point for NADP(+); that stretch reads RS. Residue S46 is modified to Phosphoserine. 70-71 contacts NADP(+); sequence DL. Residues 158–159 and Y171 contribute to the substrate site; that span reads SL. NADP(+) is bound at residue K175. Position 196 is a phosphoserine (S196). Substrate is bound at residue G200. 202–207 is a binding site for NADP(+); the sequence is LDNDMQ. The residue at position 214 (S214) is a Phosphoserine. 2 residues coordinate substrate: K222 and D258.

The protein belongs to the sepiapterin reductase family. In terms of assembly, homodimer.

Its subcellular location is the cytoplasm. The enzyme catalyses L-erythro-7,8-dihydrobiopterin + NADP(+) = L-sepiapterin + NADPH + H(+). The catalysed reaction is (6R)-L-erythro-5,6,7,8-tetrahydrobiopterin + 2 NADP(+) = 6-pyruvoyl-5,6,7,8-tetrahydropterin + 2 NADPH + 2 H(+). Catalyzes the final one or two reductions in tetra-hydrobiopterin biosynthesis to form 5,6,7,8-tetrahydrobiopterin. In Mus musculus (Mouse), this protein is Sepiapterin reductase (Spr).